The following is a 166-amino-acid chain: Small ribosomal subunit protein uS5 (166 aa).

The S5 DRBM domain maps to 12 to 75; the sequence is YIEKLVQVNR…EAARRNMIQV (64 aa).

This sequence belongs to the universal ribosomal protein uS5 family. As to quaternary structure, part of the 30S ribosomal subunit. Contacts proteins S4 and S8.

Its function is as follows. With S4 and S12 plays an important role in translational accuracy. Located at the back of the 30S subunit body where it stabilizes the conformation of the head with respect to the body. This is Small ribosomal subunit protein uS5 from Pseudomonas syringae pv. tomato (strain ATCC BAA-871 / DC3000).